The chain runs to 318 residues: N-succinylornithine carbamoyltransferase (318 aa).

Carbamoyl phosphate-binding positions include 47-50, Trp-75, and Arg-110; that span reads SLRT. Position 142 (Glu-142) interacts with N(2)-succinyl-L-ornithine. Residue 147-150 coordinates carbamoyl phosphate; that stretch reads HPLQ. Positions 176 and 236 each coordinate N(2)-succinyl-L-ornithine. 274–275 provides a ligand contact to carbamoyl phosphate; that stretch reads CL. N(2)-succinyl-L-ornithine is bound at residue Arg-278. Arg-302 serves as a coordination point for carbamoyl phosphate.

This sequence belongs to the aspartate/ornithine carbamoyltransferase superfamily. SOTCase family. In terms of assembly, homotrimer.

It carries out the reaction N(2)-succinyl-L-ornithine + carbamoyl phosphate = N(2)-succinyl-L-citrulline + phosphate + H(+). It participates in amino-acid biosynthesis; L-arginine biosynthesis. In terms of biological role, catalyzes the transfer of the carbamoyl group from carbamoyl phosphate to the delta-amino group of N(2)-succinyl-L-ornithine to produce N(2)-succinyl-L-citrulline. Is essential for arginine biosynthesis. Has no activity with either L-ornithine or L-aspartate as substrate. Also has no detectable AOTCase activity, being unable to convert N(2)-acetyl-L-ornithine to N(2)-acetyl-L-citrulline. The protein is N-succinylornithine carbamoyltransferase of Bacteroides thetaiotaomicron (strain ATCC 29148 / DSM 2079 / JCM 5827 / CCUG 10774 / NCTC 10582 / VPI-5482 / E50).